A 460-amino-acid chain; its full sequence is ATP synthase subunit beta (460 aa).

An ATP-binding site is contributed by 150–157 (GGAGVGKT).

The protein belongs to the ATPase alpha/beta chains family. As to quaternary structure, F-type ATPases have 2 components, CF(1) - the catalytic core - and CF(0) - the membrane proton channel. CF(1) has five subunits: alpha(3), beta(3), gamma(1), delta(1), epsilon(1). CF(0) has three main subunits: a(1), b(2) and c(9-12). The alpha and beta chains form an alternating ring which encloses part of the gamma chain. CF(1) is attached to CF(0) by a central stalk formed by the gamma and epsilon chains, while a peripheral stalk is formed by the delta and b chains.

The protein localises to the cell inner membrane. The enzyme catalyses ATP + H2O + 4 H(+)(in) = ADP + phosphate + 5 H(+)(out). Functionally, produces ATP from ADP in the presence of a proton gradient across the membrane. The catalytic sites are hosted primarily by the beta subunits. The polypeptide is ATP synthase subunit beta (Pectobacterium atrosepticum (strain SCRI 1043 / ATCC BAA-672) (Erwinia carotovora subsp. atroseptica)).